The chain runs to 622 residues: Low affinity potassium transport system protein Kup (622 aa).

12 consecutive transmembrane segments (helical) span residues 9-29, 49-69, 101-121, 137-157, 165-185, 212-232, 247-267, 279-299, 337-357, 363-383, 397-417, and 419-439; these read LPAVTLAAIGVVYGDIGTSPL, VFGFLSLIFWLLVLVVSLKYL, VLVIMGLIGGSFFYGEVVITP, PSMDSYIVPLSIVVLTLLFII, VGKLFAPVMLIWFLTLGVLGA, AVSFFALGAVVLAITGVEALY, WFTVVLPSLVLNYFGQGALLL, LLAPDWALIPLMILATLATII, IYIPAINWMLYIAVVIVIVSF, LAAAYGIAVTGTMVITSILFC, AWVLLAGLLVIDVPMFLANVV, and ILSGGWLPLALGMVMFIIMTT.

This sequence belongs to the HAK/KUP transporter (TC 2.A.72) family.

It localises to the cell inner membrane. It catalyses the reaction K(+)(in) + H(+)(in) = K(+)(out) + H(+)(out). Responsible for the low-affinity transport of potassium into the cell. Likely operates as a K(+):H(+) symporter. This is Low affinity potassium transport system protein Kup from Pectobacterium carotovorum subsp. carotovorum (strain PC1).